The sequence spans 240 residues: Guanine nucleotide exchange factor sopE2 (240 aa).

The GEF catalytic domain stretch occupies residues 78–240; sequence LTSKTVKDFM…IANKYLQNAS (163 aa).

The protein belongs to the GEF (guanine exchange factor) SopE family.

It localises to the secreted. Activator for CDC42 by directly engaging this Rho GTPase and acting as potent guanine nucleotide exchange factor (GEF). This activation results in actin cytoskeleton rearrangements and stimulates membrane ruffling, promoting bacterial entry into non-phagocytic cells. Also activates NF-kB, p38 and ERK kinases, which are known to be involved in the induction of IL-8 expression. Chaperone InvB is required for secretion, translocation and stabilization of intracellular levels of sopE2. The chain is Guanine nucleotide exchange factor sopE2 (sopE2) from Salmonella typhimurium (strain LT2 / SGSC1412 / ATCC 700720).